The chain runs to 618 residues: MPAYRSRTTTHGRNMAGARGLWRATGMKDSDFGKPIIAVVNSFTQFVPGHVHLKDLGQLVAREIEAAGGVAKEFNTIAVDDGIAMGHDGMLYSLPSRELIADSVEYMVNAHCADAMVCISNCDKITPGMLMAAMRLNIPAVFVSGGPMEAGKVVLKGKTHAVDLIDAMVAAADSAMSDEDVQTMERSACPTCGSCSGMFTANSMNCLTEALGLSLPGNGSVLATHADRKRLFVEAGHTIVDLARRYYEGDDASVLPRNIANFKAFENAMTLDIAMGGSTNTVLHLLAAAREAELDFSMKDIDRLSRRVPCLSKIAPSVSDVHMEDVHRAGGIMAILGELDRAGLLDTSCTTVHSETLGAALARWDIRQSNSESVRTFFRAAPGGVPSQTAFSQDRRYDELDLDREKGVIRDAAHAFSKDGGLAVLYGNIALDGCIVKTAGVDASILTFSGPVKVFESQDDAVSAILTNKIVAGDVVVIRYEGPRGGPGMQEMLYPTSYLKSKGLGKACALITDGRFSGGTSGLSIGHVSPEAAEGGLIGLVRDGDRISIDIPNRTISLDVSEAELAKRGEEERARGEAAWTPKDRKRNVSAALQAYAMLTTSAANGAVRDVKRRFGKN.

Position 81 (D81) interacts with Mg(2+). C122 is a [2Fe-2S] cluster binding site. The Mg(2+) site is built by D123 and K124. N6-carboxylysine is present on K124. C195 lines the [2Fe-2S] cluster pocket. E491 provides a ligand contact to Mg(2+). S517 functions as the Proton acceptor in the catalytic mechanism.

This sequence belongs to the IlvD/Edd family. In terms of assembly, homodimer. The cofactor is [2Fe-2S] cluster. It depends on Mg(2+) as a cofactor.

It carries out the reaction (2R)-2,3-dihydroxy-3-methylbutanoate = 3-methyl-2-oxobutanoate + H2O. The catalysed reaction is (2R,3R)-2,3-dihydroxy-3-methylpentanoate = (S)-3-methyl-2-oxopentanoate + H2O. Its pathway is amino-acid biosynthesis; L-isoleucine biosynthesis; L-isoleucine from 2-oxobutanoate: step 3/4. It participates in amino-acid biosynthesis; L-valine biosynthesis; L-valine from pyruvate: step 3/4. Functionally, functions in the biosynthesis of branched-chain amino acids. Catalyzes the dehydration of (2R,3R)-2,3-dihydroxy-3-methylpentanoate (2,3-dihydroxy-3-methylvalerate) into 2-oxo-3-methylpentanoate (2-oxo-3-methylvalerate) and of (2R)-2,3-dihydroxy-3-methylbutanoate (2,3-dihydroxyisovalerate) into 2-oxo-3-methylbutanoate (2-oxoisovalerate), the penultimate precursor to L-isoleucine and L-valine, respectively. This chain is Dihydroxy-acid dehydratase, found in Rhodopseudomonas palustris (strain ATCC BAA-98 / CGA009).